A 297-amino-acid chain; its full sequence is Dehydrodolichyl diphosphate synthase complex subunit Nus1 (297 aa).

Transmembrane regions (helical) follow at residues 7 to 26 (LVWRVLHALLCLHLTLTSWL) and 40 to 56 (CCRAASAAVLAPLGFTL). Basic residues predominate over residues 63 to 73 (GRNRRHHRHPH). A disordered region spans residues 63 to 86 (GRNRRHHRHPHGGPGPGPGPAATH). Residues 121–139 (IASLVVWCMAVGISYISVY) traverse the membrane as a helical segment. Residues asparagine 148 and asparagine 275 are each glycosylated (N-linked (GlcNAc...) asparagine). The short motif at 294–296 (RLG) is the RXG motif; crucial for prenyltransferase activity element. Isopentenyl diphosphate is bound by residues leucine 295 and glycine 296.

It belongs to the UPP synthase family. As to quaternary structure, the active dehydrodolichyl diphosphate synthase complex is a heterotetramer composed of a dimer of heterodimer of DHDDS and NUS1. Interacts with NPC2. Mg(2+) is required as a cofactor. Highly expressed in heart, liver, kidney and pancreas.

It localises to the endoplasmic reticulum membrane. It carries out the reaction n isopentenyl diphosphate + (2E,6E)-farnesyl diphosphate = a di-trans,poly-cis-polyprenyl diphosphate + n diphosphate. It participates in protein modification; protein glycosylation. The protein operates within lipid metabolism. In terms of biological role, with DHDDS, forms the dehydrodolichyl diphosphate synthase (DDS) complex, an essential component of the dolichol monophosphate (Dol-P) biosynthetic machinery. Both subunits contribute to enzymatic activity, i.e. condensation of multiple copies of isopentenyl pyrophosphate (IPP) to farnesyl pyrophosphate (FPP) to produce dehydrodolichyl diphosphate (Dedol-PP), a precursor of dolichol phosphate which is utilized as a sugar carrier in protein glycosylation in the endoplasmic reticulum (ER). Synthesizes long-chain polyprenols, mostly of C95 and C100 chain length. Regulates the glycosylation and stability of nascent NPC2, thereby promoting trafficking of LDL-derived cholesterol. Acts as a specific receptor for the N-terminus of Nogo-B, a neural and cardiovascular regulator. In Mus musculus (Mouse), this protein is Dehydrodolichyl diphosphate synthase complex subunit Nus1.